Reading from the N-terminus, the 352-residue chain is MGEDMRGVKVVSKWPPMIVMVTSQVAMGSVNALVKKALDVGVNHMIIGAYRMAISSFILVPIAYFLERKIIPKITFRLMVDHFISGLLGASLMQFFYLLGLSYTSATVACALVSLMPAITFAFALILRTEKIKDLKTQAGMIKVMGTLICISGALFLTFYKGPHISNSHSHLEALPHNNSDHNTKNWLLGCLYLVIGIVLLSLWILFQGTLSIKYPCKFSSTCLMSIFAAFQCALLSLYKSRDLKHWIIDDGFVIGVIIYAGVIGQAMSTVAATWGINRLGAVFASAIMPVSLISATLFDFLILHTPLYLGSVIGSVGTIIGLYVFLWGKNKETEADITTLSSRMNNEDQRV.

The next 10 helical transmembrane spans lie at 14–34 (WPPM…NALV), 46–66 (IIGA…AYFL), 83–103 (FISG…GLSY), 107–127 (TVAC…ALIL), 139–159 (AGMI…FLTF), 187–207 (WLLG…WILF), 219–239 (FSST…LSLY), 253–273 (FVIG…TVAA), 283–303 (VFAS…DFLI), and 308–328 (LYLG…VFLW). EamA domains are found at residues 27-157 (MGSV…ALFL) and 192-335 (LYLV…KETE).

The protein belongs to the drug/metabolite transporter (DMT) superfamily. Plant drug/metabolite exporter (P-DME) (TC 2.A.7.4) family.

The protein localises to the membrane. This chain is WAT1-related protein At1g11450, found in Arabidopsis thaliana (Mouse-ear cress).